The following is a 461-amino-acid chain: Phosphoglycerate kinase, chloroplastic (461 aa).

Residues 1 to 60 constitute a chloroplast transit peptide; that stretch reads MALSMKMRANARVSGRRVAAVAPRVVPFSSASSSVLRSGFALRCLWTSAAWAALASVVEA. Residues Ala82, Asp83, Asn85, Arg100, Ser122, His123, Gly125, Arg126, Arg182, His214, and Arg215 each contribute to the (2R)-3-phosphoglycerate site. Residue Gly260 coordinates ADP. Gly260 is a CDP binding site. Residues Lys262 and Lys266 each coordinate AMP. Lys266 serves as a coordination point for ATP. Gly284 is a binding site for ADP. A CDP-binding site is contributed by Gly284. The AMP site is built by Gly285 and Gly357. The ATP site is built by Gly285 and Gly357. Gly382 and Phe387 together coordinate CDP. Phe387 serves as a coordination point for ADP. Glu388 contacts AMP. Residues Glu388, Asp419, and Ser420 each contribute to the ATP site. Position 419 (Asp419) interacts with Mg(2+).

It belongs to the phosphoglycerate kinase family. As to quaternary structure, monomer. The cofactor is Mg(2+).

Its subcellular location is the plastid. The protein resides in the chloroplast. It catalyses the reaction (2R)-3-phosphoglycerate + ATP = (2R)-3-phospho-glyceroyl phosphate + ADP. It participates in carbohydrate biosynthesis; Calvin cycle. This Chlamydomonas reinhardtii (Chlamydomonas smithii) protein is Phosphoglycerate kinase, chloroplastic.